Here is a 1209-residue protein sequence, read N- to C-terminus: 3',5'-cyclic-AMP phosphodiesterase, isoform I (1209 aa).

Disordered regions lie at residues 16–35, 59–82, 275–353, 372–403, 442–498, 626–655, and 754–792; these read NVAK…GSGT, GGGS…KRKS, LYSG…PLPP, SATS…SPRI, ETLA…MQAE, VPAS…LSQG, and SAGQ…RLPT. Gly residues-rich tracts occupy residues 25 to 35 and 59 to 77; these read SSNGTGNGSGT and GGGS…GSGS. The segment covering 275-290 has biased composition (polar residues); that stretch reads LYSGSNPSTNPCQSAV. Residues 291–314 are compositionally biased toward low complexity; that stretch reads QNQGQNSNPNPNQNPNTNPNQNQQ. Polar residues predominate over residues 315–324; it reads RCSCQPQTSP. The span at 372 to 383 shows a compositional bias: low complexity; it reads SATSSSAGTVPP. Over residues 385–400 the composition is skewed to polar residues; the sequence is GQQTQEYIAGTSSTPS. 2 stretches are compositionally biased toward low complexity: residues 445-462 and 472-483; these read ASSS…NSSS and TSSSASALATSH. Composition is skewed to polar residues over residues 484–498 and 627–645; these read PSNS…MQAE and PASN…SRSG. The region spanning 795-1124 is the PDEase domain; that stretch reads VETPRENELG…DYYQSMIPPS (330 aa). His-871 (proton donor) is an active-site residue. 871–875 contacts 3',5'-cyclic AMP; the sequence is HNSLH. His-875, His-911, Asp-912, and Asp-1029 together coordinate a divalent metal cation. Residues Asp-912, Asp-1029, and Gln-1080 each contribute to the 3',5'-cyclic AMP site. A compositionally biased stretch (acidic residues) spans 1146-1163; the sequence is EESDQENLAELEEGDESG. The segment at 1146–1209 is disordered; sequence EESDQENLAE…CQNQPQHGGM (64 aa). Positions 1164–1181 are enriched in low complexity; sequence GESTTTGTTGTTAASALS. Over residues 1182–1193 the composition is skewed to gly residues; it reads GAGGGGGGGGGM. Residues 1199–1209 show a composition bias toward polar residues; it reads GCQNQPQHGGM.

The protein belongs to the cyclic nucleotide phosphodiesterase family. PDE4 subfamily. Monomer. A divalent metal cation serves as cofactor.

The catalysed reaction is 3',5'-cyclic AMP + H2O = AMP + H(+). Its pathway is purine metabolism; 3',5'-cyclic AMP degradation; AMP from 3',5'-cyclic AMP: step 1/1. In terms of biological role, hydrolyzes the second messenger cAMP, which is a key regulator of many important physiological processes. Vital for female fertility. Required for learning/memory. In Drosophila melanogaster (Fruit fly), this protein is 3',5'-cyclic-AMP phosphodiesterase, isoform I.